Consider the following 400-residue polypeptide: Diphosphomevalonate decarboxylase (400 aa).

(R)-5-diphosphomevalonate-binding positions include Tyr-25 to Lys-28, Arg-80, Ser-155 to Arg-160, and Thr-211.

It belongs to the diphosphomevalonate decarboxylase family. As to quaternary structure, homodimer.

It is found in the cytoplasm. It catalyses the reaction (R)-5-diphosphomevalonate + ATP = isopentenyl diphosphate + ADP + phosphate + CO2. The protein operates within steroid biosynthesis; cholesterol biosynthesis. Functionally, catalyzes the ATP dependent decarboxylation of (R)-5-diphosphomevalonate to form isopentenyl diphosphate (IPP). Functions in the mevalonate (MVA) pathway leading to isopentenyl diphosphate (IPP), a key precursor for the biosynthesis of isoprenoids and sterol synthesis. The protein is Diphosphomevalonate decarboxylase (mvd) of Danio rerio (Zebrafish).